A 452-amino-acid chain; its full sequence is Cell division protein FtsZ (452 aa).

GTP is bound by residues 24–28, 111–113, Glu-142, Arg-146, and Asp-190; these read GAGSN and GTG.

This sequence belongs to the FtsZ family. As to quaternary structure, homodimer. Polymerizes to form a dynamic ring structure in a strictly GTP-dependent manner. Interacts directly with several other division proteins.

It localises to the cytoplasm. In terms of biological role, essential cell division protein that forms a contractile ring structure (Z ring) at the future cell division site. The regulation of the ring assembly controls the timing and the location of cell division. One of the functions of the FtsZ ring is to recruit other cell division proteins to the septum to produce a new cell wall between the dividing cells. Binds GTP and shows GTPase activity. The chain is Cell division protein FtsZ from Rickettsia typhi (strain ATCC VR-144 / Wilmington).